Here is a 224-residue protein sequence, read N- to C-terminus: Octanoyltransferase (224 aa).

The region spanning 38–213 (SATVDELWWV…YLVRRLGYSA (176 aa)) is the BPL/LPL catalytic domain. Residues 77–84 (RGGQVTYH), 144–146 (SLG), and 157–159 (GLS) each bind substrate. Cysteine 175 serves as the catalytic Acyl-thioester intermediate.

Belongs to the LipB family.

It is found in the cytoplasm. It carries out the reaction octanoyl-[ACP] + L-lysyl-[protein] = N(6)-octanoyl-L-lysyl-[protein] + holo-[ACP] + H(+). Its pathway is protein modification; protein lipoylation via endogenous pathway; protein N(6)-(lipoyl)lysine from octanoyl-[acyl-carrier-protein]: step 1/2. Functionally, catalyzes the transfer of endogenously produced octanoic acid from octanoyl-acyl-carrier-protein onto the lipoyl domains of lipoate-dependent enzymes. Lipoyl-ACP can also act as a substrate although octanoyl-ACP is likely to be the physiological substrate. This Nitrosococcus oceani (strain ATCC 19707 / BCRC 17464 / JCM 30415 / NCIMB 11848 / C-107) protein is Octanoyltransferase.